The sequence spans 129 residues: Small ribosomal subunit protein uS8 (129 aa).

The protein belongs to the universal ribosomal protein uS8 family. As to quaternary structure, part of the 30S ribosomal subunit. Contacts proteins S5 and S12.

One of the primary rRNA binding proteins, it binds directly to 16S rRNA central domain where it helps coordinate assembly of the platform of the 30S subunit. The polypeptide is Small ribosomal subunit protein uS8 (Dichelobacter nodosus (strain VCS1703A)).